The primary structure comprises 395 residues: Bone morphogenetic protein 2 (395 aa).

Positions 1 to 23 (MVAGTRCLLALLLPQVLLGGAAG) are cleaved as a signal peptide. A propeptide spans 24-281 (LIPELGRRKF…GHPLHRREKR (258 aa)) (cleaved by PCSK5). Ser86 carries the phosphoserine modification. Asn134 and Asn199 each carry an N-linked (GlcNAc...) asparagine glycan. The tract at residues 270–292 (GKGHPLHRREKRQAKHKQRKRLK) is disordered. Positions 273–292 (HPLHRREKRQAKHKQRKRLK) are enriched in basic residues. Disulfide bonds link Cys295–Cys360, Cys324–Cys392, and Cys328–Cys394. N-linked (GlcNAc...) asparagine glycosylation occurs at Asn337.

Belongs to the TGF-beta family. Homodimer; disulfide-linked. Interacts with SOSTDC1. Interacts with GREM2, RGMA, RGMB and RGMC. Interacts with ASPN. Interacts with MAFP5. Interacts with FBN1 (via N-terminal domain) and FBN2. Interacts with type I receptor BMPR1A. Interacts with type II receptor BMPR2. Interacts with SCUBE3. Interacts with TNFAIP6 (primarily via Link domain); this interaction is inhibited by hyaluronan. Interacts with ERFE. Interacts with BMPR1A/ALK3; the interaction may induce HAMP expression. Forms heterodimers with BMP6 in vitro; the heterodimer then binds to its receptor BMPR1A /ALK3 and may induce HAMP expression. Interacts with TGFBR3.

It is found in the secreted. Its function is as follows. Growth factor of the TGF-beta superfamily that plays essential roles in many developmental processes, including cardiogenesis, neurogenesis, and osteogenesis. Induces cartilage and bone formation. Initiates the canonical BMP signaling cascade by associating with type I receptor BMPR1A and type II receptor BMPR2. Once all three components are bound together in a complex at the cell surface, BMPR2 phosphorylates and activates BMPR1A. In turn, BMPR1A propagates signal by phosphorylating SMAD1/5/8 that travel to the nucleus and act as activators and repressors of transcription of target genes. Also acts to promote expression of HAMP, via the interaction with its receptor BMPR1A/ALK3. Can also signal through non-canonical pathways such as ERK/MAP kinase signaling cascade that regulates osteoblast differentiation. Also stimulates the differentiation of myoblasts into osteoblasts via the EIF2AK3-EIF2A-ATF4 pathway by stimulating EIF2A phosphorylation which leads to increased expression of ATF4 which plays a central role in osteoblast differentiation. Acts as a positive regulator of odontoblast differentiation during mesenchymal tooth germ formation, expression is repressed during the bell stage by MSX1-mediated inhibition of CTNNB1 signaling. The sequence is that of Bone morphogenetic protein 2 (BMP2) from Oryctolagus cuniculus (Rabbit).